The primary structure comprises 138 residues: Transmembrane protein 170A (138 aa).

The Lumenal segment spans residues Met1–Val44. Asn26 carries an N-linked (GlcNAc...) asparagine glycan. Residues Phe45–Phe65 traverse the membrane as a helical segment. Over Thr66–Ser79 the chain is Cytoplasmic. The helical transmembrane segment at Leu80–Ala100 threads the bilayer. At Gly101–Met110 the chain is on the lumenal side. A helical transmembrane segment spans residues Ile111–Phe131. The Cytoplasmic segment spans residues Leu132 to Leu138.

Belongs to the TMEM170 family.

The protein localises to the endoplasmic reticulum membrane. Its subcellular location is the nucleus envelope. May regulate membrane morphogenesis in the endoplasmic reticulum (ER) by promoting ER sheet formation at the expense of ER tubules. In Gallus gallus (Chicken), this protein is Transmembrane protein 170A (TMEM170A).